We begin with the raw amino-acid sequence, 423 residues long: Enolase (423 aa).

Q162 is a binding site for (2R)-2-phosphoglycerate. The active-site Proton donor is E204. 3 residues coordinate Mg(2+): D241, E284, and D311. (2R)-2-phosphoglycerate-binding residues include K336, R365, S366, and K387. K336 (proton acceptor) is an active-site residue.

Belongs to the enolase family. Mg(2+) is required as a cofactor.

Its subcellular location is the cytoplasm. The protein resides in the secreted. It localises to the cell surface. It catalyses the reaction (2R)-2-phosphoglycerate = phosphoenolpyruvate + H2O. Its pathway is carbohydrate degradation; glycolysis; pyruvate from D-glyceraldehyde 3-phosphate: step 4/5. Functionally, catalyzes the reversible conversion of 2-phosphoglycerate (2-PG) into phosphoenolpyruvate (PEP). It is essential for the degradation of carbohydrates via glycolysis. The polypeptide is Enolase (Bartonella bacilliformis (strain ATCC 35685 / KC583 / Herrer 020/F12,63)).